Reading from the N-terminus, the 209-residue chain is Kynurenine formamidase (209 aa).

A substrate-binding site is contributed by F18. Positions 48, 52, and 54 each coordinate Zn(2+). H58 functions as the Proton donor/acceptor in the catalytic mechanism. Zn(2+) is bound by residues H160 and E172.

This sequence belongs to the Cyclase 1 superfamily. KynB family. As to quaternary structure, homodimer. It depends on Zn(2+) as a cofactor.

It catalyses the reaction N-formyl-L-kynurenine + H2O = L-kynurenine + formate + H(+). It participates in amino-acid degradation; L-tryptophan degradation via kynurenine pathway; L-kynurenine from L-tryptophan: step 2/2. In terms of biological role, catalyzes the hydrolysis of N-formyl-L-kynurenine to L-kynurenine, the second step in the kynurenine pathway of tryptophan degradation. This chain is Kynurenine formamidase, found in Bordetella bronchiseptica (strain ATCC BAA-588 / NCTC 13252 / RB50) (Alcaligenes bronchisepticus).